The primary structure comprises 253 residues: MASNFWTSTHYKELKDPEEVNVVHPLDAQRGISVEDFRLIKLHMSNYISKLAQHIKIRQRVVATAVTYMRRVYTRKSLTEYEPRLVAPTCLYLACKAEESVVHAKLLVFYMKKLYADEKFRYEIKDILEMEMKVLEALNFYLVVFHPYRSLPEFLQDSGINDTSMTHLTWGLVNDTYRMDLILIHPPFLITLACIYIASVHKEKDIKTWFEELSVDMNIVKNIAMEILDFYENHRLFTEERVHAAFNKLATNP.

Belongs to the cyclin family. Cyclin C subfamily.

In Arabidopsis thaliana (Mouse-ear cress), this protein is Cyclin-C1-2 (CYCC1-2).